The primary structure comprises 430 residues: tRNA(Ile)-lysidine synthase (430 aa).

Residue Ser27 to Ser32 coordinates ATP.

This sequence belongs to the tRNA(Ile)-lysidine synthase family.

It localises to the cytoplasm. It carries out the reaction cytidine(34) in tRNA(Ile2) + L-lysine + ATP = lysidine(34) in tRNA(Ile2) + AMP + diphosphate + H(+). In terms of biological role, ligates lysine onto the cytidine present at position 34 of the AUA codon-specific tRNA(Ile) that contains the anticodon CAU, in an ATP-dependent manner. Cytidine is converted to lysidine, thus changing the amino acid specificity of the tRNA from methionine to isoleucine. In Rickettsia typhi (strain ATCC VR-144 / Wilmington), this protein is tRNA(Ile)-lysidine synthase.